The following is a 1374-amino-acid chain: Sterol 3-beta-glucosyltransferase (1374 aa).

Basic and acidic residues predominate over residues 1 to 14 (MRPLRDDAKRRADR). 3 disordered regions span residues 1 to 60 (MRPL…RDGN), 83 to 190 (ARFD…PRAA), and 206 to 227 (TSATPYLPPNNPDKSMEDQPQS). Positions 16–28 (LSASMKPTSSNRP) are enriched in polar residues. The span at 29 to 41 (FSDRVPDRFKDGD) shows a compositional bias: basic and acidic residues. Residues 101–112 (VEQTTGKASSRT) show a composition bias toward polar residues. A compositionally biased stretch (basic and acidic residues) spans 125–138 (KRSEPSKLVLEERG). Positions 234–283 (MRLMKMFEFAKPEKVLVEYACSLLQSMLLQGYMYVTEGHICFYAYLPKKS) constitute a GRAM 1 domain. The 98-residue stretch at 285 to 382 (VAIKSGYLSK…WVKALQQVIF (98 aa)) folds into the PH domain. The segment at 458-538 (ATKEAQDQHD…SMTDTTESAS (81 aa)) is disordered. 2 stretches are compositionally biased toward basic and acidic residues: residues 461 to 473 (EAQDQHDIKHQPE) and 490 to 499 (SDQRREDSPR). Positions 503-538 (SSVGNENQGSADSFAEQGTGSSPIIQSMTDTTESAS) are enriched in polar residues. A GRAM 2 domain is found at 704-770 (DRFRAHFALP…KDIENVEKEK (67 aa)). Positions 893, 894, 896, 1196, 1198, 1211, 1215, 1216, 1235, and 1236 each coordinate UDP-alpha-D-glucose. A compositionally biased stretch (polar residues) spans 1314-1325 (ASSTPFSPTPTA). Residues 1314–1338 (ASSTPFSPTPTAKASPDGGDDDLDD) are disordered.

The protein belongs to the glycosyltransferase 28 family.

The protein resides in the cytoplasm. Its subcellular location is the preautophagosomal structure membrane. The catalysed reaction is a sterol + UDP-alpha-D-glucose = a sterol 3-beta-D-glucoside + UDP + H(+). It carries out the reaction ergosterol + UDP-alpha-D-glucose = ergosteryl 3-beta-D-glucoside + UDP + H(+). In terms of biological role, sterol glycosyltransferase responsible for the glycosylation of ergosterol to form ergosterol-glucoside. The protein is Sterol 3-beta-glucosyltransferase of Penicillium rubens (strain ATCC 28089 / DSM 1075 / NRRL 1951 / Wisconsin 54-1255) (Penicillium chrysogenum).